The chain runs to 312 residues: Ribosomal protein L11 methyltransferase (312 aa).

Residues T160, G181, D203, and N246 each coordinate S-adenosyl-L-methionine.

It belongs to the methyltransferase superfamily. PrmA family.

It is found in the cytoplasm. It catalyses the reaction L-lysyl-[protein] + 3 S-adenosyl-L-methionine = N(6),N(6),N(6)-trimethyl-L-lysyl-[protein] + 3 S-adenosyl-L-homocysteine + 3 H(+). Its function is as follows. Methylates ribosomal protein L11. The polypeptide is Ribosomal protein L11 methyltransferase (Staphylococcus aureus (strain COL)).